The primary structure comprises 156 residues: MRNTEKQDNLVRAFKSLLKEERFGSQGEIVDALKHEGFESINQSKVSRMLTKFGAVRTRNAKMEMVYCLPAELGVPTVSSSLRELVLDIDHNNALVVIHTGPGAAQLIARLLDSLGKSEGILGVVAGDDTIFITPTLSVTTKQLFDSVCELFEYAG.

It belongs to the ArgR family.

It localises to the cytoplasm. Its pathway is amino-acid biosynthesis; L-arginine biosynthesis [regulation]. Its function is as follows. Regulates arginine biosynthesis genes. The sequence is that of Arginine repressor from Vibrio atlanticus (strain LGP32) (Vibrio splendidus (strain Mel32)).